We begin with the raw amino-acid sequence, 320 residues long: Malate dehydrogenase (320 aa).

NAD(+)-binding positions include G10–G15 and D34. Residues R83 and R89 each coordinate substrate. NAD(+) contacts are provided by residues N96 and I119 to N121. N121 and R152 together coordinate substrate. The active-site Proton acceptor is H176.

This sequence belongs to the LDH/MDH superfamily. MDH type 3 family.

It carries out the reaction (S)-malate + NAD(+) = oxaloacetate + NADH + H(+). Catalyzes the reversible oxidation of malate to oxaloacetate. This Methylorubrum extorquens (strain CM4 / NCIMB 13688) (Methylobacterium extorquens) protein is Malate dehydrogenase.